The sequence spans 300 residues: MSVTTPRRETSLLSRALRATAAAATAVVATVALAAPAQAANPYERGPNPTESMLEARSGPFSVSEERASRFGADGFGGGTIYYPRENNTYGAIAISPGYTGTQSSIAWLGERIASHGFVVIAIDTNTTLDQPDSRARQLNAALDYMLTDASSAVRNRIDASRLAVMGHSMGGGGTLRLASQRPDLKAAIPLTPWHLNKSWRDITVPTLIIGAEYDTIASVTLHSKPFYNSIPSPTDKAYLELDGASHFAPNITNKTIGMYSVAWLKRFVDEDTRYTQFLCPGPRTGLLSDVEEYRSTCPF.

The first 39 residues, 1 to 39, serve as a signal peptide directing secretion; that stretch reads MSVTTPRRETSLLSRALRATAAAATAVVATVALAAPAQA. Position 99 (Y99) interacts with poly(ethylene terephthalate). Residue S169 is the Nucleophile of the active site. 2 residues coordinate poly(ethylene terephthalate): M170 and W194. E213 contacts Ca(2+). D215 acts as the Charge relay system in catalysis. A Ca(2+)-binding site is contributed by D243. H247 functions as the Charge relay system in the catalytic mechanism. An intrachain disulfide couples C280 to C298. E292 is a binding site for Ca(2+).

Belongs to the AB hydrolase superfamily. As to quaternary structure, monomer. It depends on Ca(2+) as a cofactor.

It localises to the secreted. It is found in the periplasm. The catalysed reaction is an acetyl ester + H2O = an aliphatic alcohol + acetate + H(+). The enzyme catalyses (ethylene terephthalate)(n) + H2O = (ethylene terephthalate)(n-1) + 4-[(2-hydroxyethoxy)carbonyl]benzoate + H(+). It catalyses the reaction a butanoate ester + H2O = an aliphatic alcohol + butanoate + H(+). It carries out the reaction cutin + H2O = cutin monomers.. The catalysed reaction is a hexanoate ester + H2O = an aliphatic alcohol + hexanoate + H(+). The enzyme catalyses an octanoate ester + H2O = an aliphatic alcohol + octanoate + H(+). Its activity is regulated as follows. Activated by calcium ions. Activated by magnesium ions. Activated by manganese ions. Inhibited by the serine hydrolase inhibitor phenylmethanesulfonyl fluoride (PMSF). Inhibited by the chelator ethylenediaminetetraacetic acid (EDTA). Inhibited by iron ions. Inhibited by aluminum ions. Inhibited by rubidium ions. Inhibited by lithium ions. Catalyzes the hydrolysis of cutin, a polyester that forms the structure of plant cuticle. Shows esterase activity towards p-nitrophenol-linked aliphatic esters (pNP-aliphatic esters). Capable of degrading the plastic poly(ethylene terephthalate) (PET), the most abundant polyester plastic in the world. Can also depolymerize the synthetic polyesters poly(epsilon-caprolactone) (PCL), poly(butylene succinate-co-adipate) (PBSA), poly(butylene succinate) (PBS), and poly(lactic acid) (PLA). This Thermobifida alba (Thermomonospora alba) protein is Cutinase est2.